We begin with the raw amino-acid sequence, 278 residues long: MEPQEERETQVAAWLKKIFGDHPIPQYEVNPRTTEILHHLSERNRVRDRDVYLVIEDLKQKASEYESEAKYLQDLLMESVNFSPANLSSTGSRYLNALVDSAVALETKDTSLASFIPAVNDLTSDLFRTKSKSEEIKIELEKLEKNLTATLVLEKCLQEDVKKAELHLSTERAKVDNRRQNMDFLKAKSEEFRFGIKAAEEQLSARGMDASLSHQSLVALSEKLARLKQQTIPLKKKLESYLDLMPNPSLAQVKIEEAKRELDSIEAELTRRVDMMEL.

Coiled-coil stretches lie at residues 49–79 (RDVY…LMES), 124–177 (SDLF…KVDN), and 249–277 (SLAQ…DMME).

It belongs to the HAUS1 family. As to quaternary structure, component of the HAUS augmin-like complex. The complex interacts with the gamma-tubulin ring complex and this interaction is required for spindle assembly. Associates with microtubules. The interaction with microtubules is strong during mitosis, while it is weak or absent during interphase. It is unclear whether this interaction is direct or indirect. Interacts with EML3 (phosphorylated at 'Thr-881'). In terms of tissue distribution, widely expressed. Expressed in pancreas, kidney, skeletal muscle, liver and heart. Weakly expressed in lung, brain and placenta.

The protein localises to the cytoplasm. Its subcellular location is the cytoskeleton. It is found in the microtubule organizing center. The protein resides in the centrosome. It localises to the spindle. The protein localises to the spindle pole. Its function is as follows. Contributes to mitotic spindle assembly, maintenance of centrosome integrity and completion of cytokinesis as part of the HAUS augmin-like complex. This is HAUS augmin-like complex subunit 1 (HAUS1) from Homo sapiens (Human).